Here is a 70-residue protein sequence, read N- to C-terminus: Cytochrome c oxidase subunit 8B, mitochondrial (70 aa).

The transit peptide at 1–24 directs the protein to the mitochondrion; it reads MPRLPPALRLLQPPLRCWVVPKLH. Residues 25–35 are Mitochondrial matrix-facing; that stretch reads VSAKPARTPTS. The chain crosses the membrane as a helical span at residues 36 to 59; it reads PAEQAVGLSMMFLSFLVPAGWVLS. At 60 to 70 the chain is on the mitochondrial intermembrane side; that stretch reads HLESYKKSSTA.

Belongs to the cytochrome c oxidase VIII family. In terms of assembly, component of the cytochrome c oxidase (complex IV, CIV), a multisubunit enzyme composed of 14 subunits. The complex is composed of a catalytic core of 3 subunits MT-CO1, MT-CO2 and MT-CO3, encoded in the mitochondrial DNA, and 11 supernumerary subunits COX4I, COX5A, COX5B, COX6A, COX6B, COX6C, COX7A, COX7B, COX7C, COX8 and NDUFA4, which are encoded in the nuclear genome. The complex exists as a monomer or a dimer and forms supercomplexes (SCs) in the inner mitochondrial membrane with NADH-ubiquinone oxidoreductase (complex I, CI) and ubiquinol-cytochrome c oxidoreductase (cytochrome b-c1 complex, complex III, CIII), resulting in different assemblies (supercomplex SCI(1)III(2)IV(1) and megacomplex MCI(2)III(2)IV(2)).

Its subcellular location is the mitochondrion inner membrane. Its pathway is energy metabolism; oxidative phosphorylation. Component of the cytochrome c oxidase, the last enzyme in the mitochondrial electron transport chain which drives oxidative phosphorylation. The respiratory chain contains 3 multisubunit complexes succinate dehydrogenase (complex II, CII), ubiquinol-cytochrome c oxidoreductase (cytochrome b-c1 complex, complex III, CIII) and cytochrome c oxidase (complex IV, CIV), that cooperate to transfer electrons derived from NADH and succinate to molecular oxygen, creating an electrochemical gradient over the inner membrane that drives transmembrane transport and the ATP synthase. Cytochrome c oxidase is the component of the respiratory chain that catalyzes the reduction of oxygen to water. Electrons originating from reduced cytochrome c in the intermembrane space (IMS) are transferred via the dinuclear copper A center (CU(A)) of subunit 2 and heme A of subunit 1 to the active site in subunit 1, a binuclear center (BNC) formed by heme A3 and copper B (CU(B)). The BNC reduces molecular oxygen to 2 water molecules using 4 electrons from cytochrome c in the IMS and 4 protons from the mitochondrial matrix. This chain is Cytochrome c oxidase subunit 8B, mitochondrial (COX8B), found in Eulemur fulvus fulvus (Brown lemur).